The following is a 123-amino-acid chain: MRFGRLLLLAVLLAGVSQLPAVSGRKKGEKPGGCPPDDGPCLLSVPDQCTDDSQCPSTMKCCPRACFRQCIPRVSVKLGSCPVDQLHCLSPTKHLCHQDSNCSGKKRCCPTACGRDCRDPVKE.

The signal sequence occupies residues 1–24 (MRFGRLLLLAVLLAGVSQLPAVSG). 2 consecutive WAP domains span residues 27-74 (KGEK…IPRV) and 75-121 (SVKL…RDPV). 8 cysteine pairs are disulfide-bonded: Cys34-Cys62, Cys41-Cys66, Cys49-Cys61, Cys55-Cys70, Cys81-Cys109, Cys88-Cys113, Cys96-Cys108, and Cys102-Cys117.

It is found in the secreted. Putative acid-stable proteinase inhibitor. The protein is WAP four-disulfide core domain protein 5 (WFDC5) of Otolemur garnettii (Small-eared galago).